The chain runs to 525 residues: GMP synthase [glutamine-hydrolyzing] (525 aa).

Residues 9-207 enclose the Glutamine amidotransferase type-1 domain; that stretch reads RILILDFGSQ…VLQICQCEPL (199 aa). Cysteine 86 serves as the catalytic Nucleophile. Residues histidine 181 and glutamate 183 contribute to the active site. In terms of domain architecture, GMPS ATP-PPase spans 208 to 400; it reads WTPRNIIDQT…LGLPNAMLHR (193 aa). 235 to 241 contributes to the ATP binding site; it reads SGGVDSA.

In terms of assembly, homodimer.

It catalyses the reaction XMP + L-glutamine + ATP + H2O = GMP + L-glutamate + AMP + diphosphate + 2 H(+). It participates in purine metabolism; GMP biosynthesis; GMP from XMP (L-Gln route): step 1/1. Functionally, catalyzes the synthesis of GMP from XMP. In Hamiltonella defensa subsp. Acyrthosiphon pisum (strain 5AT), this protein is GMP synthase [glutamine-hydrolyzing].